The chain runs to 189 residues: Ras-like protein 1 (189 aa).

10–17 (GGGGVGKS) serves as a coordination point for GTP. The Effector region motif lies at 32 to 40 (YDPTIEDSY). GTP contacts are provided by residues 57–61 (DTAGQ) and 116–119 (NKCD). Residue Cys-186 is modified to Cysteine methyl ester. A lipid anchor (S-geranylgeranyl cysteine) is attached at Cys-186. The propeptide at 187–189 (LLL) is removed in mature form.

It belongs to the small GTPase superfamily. Ras family.

The protein resides in the cell membrane. The enzyme catalyses GTP + H2O = GDP + phosphate + H(+). In terms of biological role, ras proteins bind GDP/GTP and possess intrinsic GTPase activity. The protein is Ras-like protein 1 (RAS1) of Physarum polycephalum (Slime mold).